The primary structure comprises 211 residues: DNA-directed RNA polymerases I, II, and III subunit RPABC1 (211 aa).

This sequence belongs to the archaeal Rpo5/eukaryotic RPB5 RNA polymerase subunit family. In terms of assembly, component of the RNA polymerase I (Pol I), RNA polymerase II (Pol II) and RNA polymerase III (Pol III) complexes consisting of at least 13, 12 and 17 subunits, respectively. In RNA Pol II, this subunit is present in 2-fold molar excess over the other subunits.

Its subcellular location is the nucleus. Functionally, DNA-dependent RNA polymerase catalyzes the transcription of DNA into RNA using the four ribonucleoside triphosphates as substrates. Common component of RNA polymerases I, II and III which synthesize ribosomal RNA precursors, mRNA precursors and many functional non-coding RNAs, and small RNAs, such as 5S rRNA and tRNAs, respectively. Pol II is the central component of the basal RNA polymerase II transcription machinery. Pols are composed of mobile elements that move relative to each other. In Pol II, RPB5 is part of the lower jaw surrounding the central large cleft and thought to grab the incoming DNA template. Seems to be the major component in this process. The polypeptide is DNA-directed RNA polymerases I, II, and III subunit RPABC1 (Caenorhabditis briggsae).